The chain runs to 484 residues: ATP synthase subunit beta (484 aa).

Residue 152 to 159 coordinates ATP; the sequence is GGAGVGKT.

This sequence belongs to the ATPase alpha/beta chains family. F-type ATPases have 2 components, CF(1) - the catalytic core - and CF(0) - the membrane proton channel. CF(1) has five subunits: alpha(3), beta(3), gamma(1), delta(1), epsilon(1). CF(0) has three main subunits: a(1), b(2) and c(9-12). The alpha and beta chains form an alternating ring which encloses part of the gamma chain. CF(1) is attached to CF(0) by a central stalk formed by the gamma and epsilon chains, while a peripheral stalk is formed by the delta and b chains.

It localises to the cell inner membrane. The catalysed reaction is ATP + H2O + 4 H(+)(in) = ADP + phosphate + 5 H(+)(out). Its function is as follows. Produces ATP from ADP in the presence of a proton gradient across the membrane. The catalytic sites are hosted primarily by the beta subunits. This Campylobacter lari (strain RM2100 / D67 / ATCC BAA-1060) protein is ATP synthase subunit beta.